Here is a 400-residue protein sequence, read N- to C-terminus: Large envelope protein (400 aa).

The residue at position 1 (methionine 1) is an N-acetylmethionine. Disordered regions lie at residues 1–50 and 84–116; these read MGGW…PHKD and ILTS…RDTH. Glycine 2 is lipidated: N-myristoyl glycine; by host. The interval 2-119 is pre-S1; the sequence is GGWSSKPRKG…PPLRDTHPQA (118 aa). A pre-S region spans residues 2 to 174; sequence GGWSSKPRKG…LSTTGDPVPN (173 aa). Residues 2–181 lie on the Virion surface; in external conformation side of the membrane; it reads GGWSSKPRKG…VPNMENIASG (180 aa). Residues 2–253 are Intravirion; in internal conformation-facing; the sequence is GGWSSKPRKG…PGYRWMYLRR (252 aa). Tryptophan 4 carries an N-linked (GlcNAc...) asparagine glycan. The segment covering 96–106 has biased composition (polar residues); it reads STNRQSGRQPT. Positions 120-174 are pre-S2; the sequence is MQWNSTTFHQTLQDPRVRALYLPAGGSSSGTVSPAQNTVSAISSILSTTGDPVPN. Residues 182–202 form a helical membrane-spanning segment; it reads LLGPLLVLQAGFFSLTKILTI. Residues 203 to 253 are Intravirion; in external conformation-facing; it reads PQSLDSWWTSLSFLGGTPVCLGQNSQSPISSHSPTCCPPICPGYRWMYLRR. A helical membrane pass occupies residues 254–274; the sequence is FIIXLCILLLCLIFLLVLLDY. Over 275 to 348 the chain is Virion surface; sequence QGMLPVCPLI…WASVRFSWLS (74 aa). Asparagine 320 is a glycosylation site (N-linked (GlcNAc...) asparagine; by host). The chain crosses the membrane as a helical span at residues 349 to 369; the sequence is LLVPFVQWFVGLSPTVWLSVI. The Intravirion portion of the chain corresponds to 370 to 375; the sequence is WMMWYW. The helical transmembrane segment at 376-398 threads the bilayer; it reads GPSLYNILSPFMPLLPIFFCLWV. The Virion surface portion of the chain corresponds to 399-400; it reads YI.

The protein belongs to the orthohepadnavirus major surface antigen family. As to quaternary structure, interacts (via its myristoylated pre-S1 region) with the host SLC10A1/NTCP; this interaction is essential for viral entry. In its internal form (Li-HBsAg), interacts with the capsid protein and with the isoform S. Interacts with host chaperone CANX. In terms of assembly, associates with host chaperone CANX through its pre-S2 N glycan; this association may be essential for isoform M proper secretion. As to quaternary structure, interacts with isoform L. Interacts with the antigens of satellite virus HDV (HDVAgs); this interaction is required for encapsidation of HDV genomic RNA. Isoform M is N-terminally acetylated by host at a ratio of 90%, and N-glycosylated by host at the pre-S2 region. In terms of processing, myristoylated; this modification is essential for its interaction with the host protein SLC10A1/NTCP.

The protein localises to the virion membrane. Its function is as follows. The large envelope protein exists in two topological conformations, one which is termed 'external' or Le-HBsAg and the other 'internal' or Li-HBsAg. In its external conformation the protein attaches the virus to cell receptors and thereby initiating infection. This interaction determines the species specificity and liver tropism. This attachment induces virion internalization predominantly through caveolin-mediated endocytosis. The large envelope protein also assures fusion between virion membrane and endosomal membrane. In its internal conformation the protein plays a role in virion morphogenesis and mediates the contact with the nucleocapsid like a matrix protein. In terms of biological role, the middle envelope protein plays an important role in the budding of the virion. It is involved in the induction of budding in a nucleocapsid independent way. In this process the majority of envelope proteins bud to form subviral lipoprotein particles of 22 nm of diameter that do not contain a nucleocapsid. This chain is Large envelope protein, found in Hepatitis B virus genotype B1 (isolate Japan/Ry30/2002) (HBV-B).